Here is a 465-residue protein sequence, read N- to C-terminus: Hexokinase type 1 (465 aa).

In terms of domain architecture, Hexokinase spans 8–447 (EEDFPEVYKV…CGVGAAIMAG (440 aa)). Residues 65–197 (TGRERGQFLA…EISVDVMGII (133 aa)) form a hexokinase small subdomain region. K88 serves as a coordination point for ATP. Positions 139–165 (PLGIAFAFTLKKLALDVGILVSWTKEF) are glucose-binding. The segment at 198-436 (NVGAGSLLAL…YNFEFVITQD (239 aa)) is hexokinase large subdomain.

This sequence belongs to the hexokinase family.

It carries out the reaction a D-hexose + ATP = a D-hexose 6-phosphate + ADP + H(+). The catalysed reaction is D-mannose + ATP = D-mannose 6-phosphate + ADP + H(+). It catalyses the reaction D-fructose + ATP = D-fructose 6-phosphate + ADP + H(+). The enzyme catalyses D-glucose + ATP = D-glucose 6-phosphate + ADP + H(+). It functions in the pathway carbohydrate metabolism; hexose metabolism. Its pathway is carbohydrate degradation; glycolysis; D-glyceraldehyde 3-phosphate and glycerone phosphate from D-glucose: step 1/4. Functionally, catalyzes the phosphorylation of various hexoses to hexose 6-phosphate. This Drosophila melanogaster (Fruit fly) protein is Hexokinase type 1 (Hex-t1).